The chain runs to 253 residues: uncharacterized protein (253 aa).

Positions 1–19 are cleaved as a signal peptide; sequence MHYLKKVTIYISLLILVSG. A lipid anchor (N-palmitoyl cysteine) is attached at Cys-20. Residue Cys-20 is the site of S-diacylglycerol cysteine attachment.

Belongs to the staphylococcal tandem lipoprotein family.

The protein localises to the cell membrane. This is an uncharacterized protein from Staphylococcus epidermidis (strain ATCC 35984 / DSM 28319 / BCRC 17069 / CCUG 31568 / BM 3577 / RP62A).